The chain runs to 232 residues: Ubiquinone biosynthesis O-methyltransferase (232 aa).

The S-adenosyl-L-methionine site is built by arginine 36, glycine 55, aspartate 76, and leucine 120.

The protein belongs to the methyltransferase superfamily. UbiG/COQ3 family.

The catalysed reaction is a 3-demethylubiquinol + S-adenosyl-L-methionine = a ubiquinol + S-adenosyl-L-homocysteine + H(+). The enzyme catalyses a 3-(all-trans-polyprenyl)benzene-1,2-diol + S-adenosyl-L-methionine = a 2-methoxy-6-(all-trans-polyprenyl)phenol + S-adenosyl-L-homocysteine + H(+). It functions in the pathway cofactor biosynthesis; ubiquinone biosynthesis. O-methyltransferase that catalyzes the 2 O-methylation steps in the ubiquinone biosynthetic pathway. The sequence is that of Ubiquinone biosynthesis O-methyltransferase from Pseudomonas putida (strain ATCC 700007 / DSM 6899 / JCM 31910 / BCRC 17059 / LMG 24140 / F1).